Here is a 242-residue protein sequence, read N- to C-terminus: ATP-dependent dethiobiotin synthetase BioD (242 aa).

12 to 17 lines the ATP pocket; the sequence is EVGKTV. A Mg(2+)-binding site is contributed by Thr16. Lys37 is a catalytic residue. Ser41 lines the substrate pocket. Residues Asp51 and 112–115 contribute to the ATP site; that span reads EGAG. Asp51 and Glu112 together coordinate Mg(2+).

The protein belongs to the dethiobiotin synthetase family. As to quaternary structure, homodimer. It depends on Mg(2+) as a cofactor.

It is found in the cytoplasm. The catalysed reaction is (7R,8S)-7,8-diammoniononanoate + CO2 + ATP = (4R,5S)-dethiobiotin + ADP + phosphate + 3 H(+). It functions in the pathway cofactor biosynthesis; biotin biosynthesis; biotin from 7,8-diaminononanoate: step 1/2. Its function is as follows. Catalyzes a mechanistically unusual reaction, the ATP-dependent insertion of CO2 between the N7 and N8 nitrogen atoms of 7,8-diaminopelargonic acid (DAPA, also called 7,8-diammoniononanoate) to form a ureido ring. The polypeptide is ATP-dependent dethiobiotin synthetase BioD (Bacillus cereus (strain G9842)).